Consider the following 132-residue polypeptide: NLP effector protein 15 (132 aa).

The Conserved undecapeptide motif I signature appears at 1 to 9 (MYSWYFPKD). Residues 16–22 (GHRHDWE) carry the Hepta-peptide GHRHDWE motif II motif.

It belongs to the Necrosis inducing protein (NPP1) family.

It localises to the secreted. Its function is as follows. Secreted effector that contributes moderately to virulence during infection by P.capsici. Causes only small yellow areas at 3 days after inoculation of host C.annuum leaves; these areas expand somewhat and became necrotic at 7 days after inoculation. Leads only to chlorotic areas, without necrosis at 7 days after non-host N.benthamiana leaves infection. The polypeptide is NLP effector protein 15 (Phytophthora capsici).